We begin with the raw amino-acid sequence, 416 residues long: Histidine--tRNA ligase (416 aa).

This sequence belongs to the class-II aminoacyl-tRNA synthetase family. As to quaternary structure, homodimer.

Its subcellular location is the cytoplasm. It catalyses the reaction tRNA(His) + L-histidine + ATP = L-histidyl-tRNA(His) + AMP + diphosphate + H(+). The protein is Histidine--tRNA ligase of Clostridium kluyveri (strain NBRC 12016).